The primary structure comprises 56 residues: GSICLEPKVVGPCTAYFRRFYFDSETGKCTPFIYGGCEGNGNNFETLRACRAICRA.

The 51-residue stretch at Cys4–Cys54 folds into the BPTI/Kunitz inhibitor domain. 3 disulfide bridges follow: Cys4–Cys54, Cys13–Cys37, and Cys29–Cys50.

It belongs to the venom Kunitz-type family. Sea anemone type 2 potassium channel toxin subfamily.

The protein resides in the secreted. It localises to the nematocyst. Functionally, this protease inhibitor shows two different activities, it inhibits both the capsaicin receptor TRPV1 and serine proteases. It partially (max 50%) and reversibly inhibits mammalian TRPV1, a non-selective cation channel expressed by sensory neurons of the pain pathway). The second activity is a weak inhibition of trypsin and chymotrypsin activity (Ki=0.9 uM and Ki=4.5 uM, respectively). In vivo, shows analgesic effects on mammals. This is TauPI-stichotoxin-Hcr2c from Radianthus crispa (Leathery sea anemone).